The primary structure comprises 478 residues: Mannose-1-phosphate guanylyltransferase (478 aa).

Belongs to the mannose-6-phosphate isomerase type 2 family.

It carries out the reaction alpha-D-mannose 1-phosphate + GTP + H(+) = GDP-alpha-D-mannose + diphosphate. Its pathway is nucleotide-sugar biosynthesis; GDP-alpha-D-mannose biosynthesis; GDP-alpha-D-mannose from alpha-D-mannose 1-phosphate (GTP route): step 1/1. Involved in the biosynthesis of the capsular polysaccharide colanic acid. This chain is Mannose-1-phosphate guanylyltransferase (manC), found in Escherichia coli (strain K12).